We begin with the raw amino-acid sequence, 3291 residues long: Protocadherin-16 (3291 aa).

The signal sequence occupies residues 1–35 (MQKELSVALSCPGMKSLRTLLPLLVLLGATVPGSW). Over 36–2933 (GQAGSLDLQI…PDLNLLLVGA (2898 aa)) the chain is Extracellular. Cadherin domains are found at residues 37–137 (QAGS…APAF), 138–249 (PQAR…APAF), 250–356 (NQSR…QPSM), 369–466 (VSEA…APAF), 476–572 (LPEV…EPQF), 573–679 (QRTF…PPQF), 680–784 (YPRE…PPIF), 785–888 (EQLQ…SPAF), 889–994 (PAPE…APRF), 995–1105 (DSPT…EPTF), 1100–1205 (SEEP…SPTF), 1218–1317 (IQVP…SPDL), 1326–1429 (VPVV…APTF), 1430–1539 (ARDP…APVF), 1539–1642 (FASP…APAF), 1643–1744 (PQQE…TPTF), 1745–1848 (GNTH…APVF), 1849–1953 (PVPS…APAF), 1976–2061 (LATL…GPRF), 2062–2164 (PRTS…APRF), 2165–2270 (LRPH…RPTI), 2270–2369 (IPQP…VPTF), 2370–2475 (SQSL…APSF), 2476–2595 (TLPH…PPVF), 2596–2699 (TRAS…GPAF), 2700–2806 (PLSL…DPVF), and 2807–2926 (LAPS…APDL). N-linked (GlcNAc...) asparagine glycosylation occurs at Asn-396. Asn-2354 carries an N-linked (GlcNAc...) asparagine glycan. Residues 2867–2886 (SRAPGSGTTTSGGGGRTRRE) form a disordered region. Residues 2934–2954 (VAASLGVVVVLALAALVLGLV) traverse the membrane as a helical segment. At 2955 to 3291 (RARSRKAEAA…EPPDDTELRI (337 aa)) the chain is on the cytoplasmic side. Positions 2978–3033 (SLQKLGREPPSPPPSEHLYHQTLPSYGGPGAGGPYPRGGSLDPSHSSGRGSAEAAE) are disordered. Positions 3004 to 3013 (GGPGAGGPYP) are enriched in gly residues. Ser-3048 is modified (phosphoserine). Disordered regions lie at residues 3051–3081 (SSLA…APDT) and 3226–3291 (ASHR…ELRI). Positions 3237 to 3259 (SLSSAAMSPSFSPSLSPLAARSP) are enriched in low complexity. Residues 3270-3279 (PSASALSTES) are compositionally biased toward polar residues.

As to quaternary structure, heterophilic interaction with FAT4; this interaction affects their respective protein levels. Expressed in the epicardium and atrioventricular sulcus (at protein level).

It localises to the cell membrane. Calcium-dependent cell-adhesion protein. Mediates functions in neuroprogenitor cell proliferation and differentiation. In the heart, has a critical role for proper morphogenesis of the mitral valve, acting in the regulation of cell migration involved in valve formation. The protein is Protocadherin-16 (Dchs1) of Mus musculus (Mouse).